The following is a 71-amino-acid chain: MKTAIFTVVLALAVFAVLCLVVSTHAERHSKTDMEDSPMIQERKGLPPGKPCYGATQKIPCCGVCSHNNCT.

Residues 1-26 (MKTAIFTVVLALAVFAVLCLVVSTHA) form the signal peptide. A propeptide spanning residues 27–43 (ERHSKTDMEDSPMIQER) is cleaved from the precursor. Cystine bridges form between Cys-52-Cys-65 and Cys-61-Cys-70.

The protein belongs to the neurotoxin 36 family. 02 subfamily. As to expression, expressed by the venom gland.

Its subcellular location is the secreted. In terms of biological role, reversibly blocks N-type calcium channels (Cav2.2/CACNA1B) in rat dorsal root ganglion cells. Elicits no toxic symptoms in either vertebrates or invertebrates during a period of 48 hours post-injection, when it was assayed in vivo by direct injection into mice and cockroaches. This Cyriopagopus hainanus (Chinese bird spider) protein is Hainantoxin-X-2.